Reading from the N-terminus, the 487-residue chain is MRFSLSTTGLQDWNGDVLVVGLLQDQPATDLEARFPGLGAALAQQQFKGKPSEQLLINRLGNNGPQRLVVLGLGPANAFNLDGVRSAAARAAKAASGHTGSLGLQLSWDGLEPTAAAAAAAEAARLALYADQRFRKAPEPRRQPEALELIGLPATAAAGLQTVDATCAGVELARELVAAPPNVVTPAALAETAAELARNHGLELTVLERADCEARGMGAFLCVSQGSDLDPKLIHLIYRPDGEVKRRVALVGKGLTFDSGGYNLKVGAAQIDMMKFDMGGSAAVLGAMRSIAERKPAGVEVHMIVASCENMINGSAVHPGDIVTAADGTTIEINNTDAEGRLTLADALLYASEQKPDAVVDLATLTGACVIALGDEMAGLWSNNDGLATALQQAADAGGEGLWRMPLRASYKEGLKSKLADFKNTGPRPGGSITAALFLEHFVGDGIAWAHIDIAGTVWSDKGRGLDPAGATGYGVRTLANWICNPE.

Positions 253 and 258 each coordinate Mn(2+). Lys265 is a catalytic residue. The Mn(2+) site is built by Asp277, Asp337, and Glu339. The active site involves Arg341.

This sequence belongs to the peptidase M17 family. The cofactor is Mn(2+).

The protein resides in the cytoplasm. The catalysed reaction is Release of an N-terminal amino acid, Xaa-|-Yaa-, in which Xaa is preferably Leu, but may be other amino acids including Pro although not Arg or Lys, and Yaa may be Pro. Amino acid amides and methyl esters are also readily hydrolyzed, but rates on arylamides are exceedingly low.. The enzyme catalyses Release of an N-terminal amino acid, preferentially leucine, but not glutamic or aspartic acids.. In terms of biological role, presumably involved in the processing and regular turnover of intracellular proteins. Catalyzes the removal of unsubstituted N-terminal amino acids from various peptides. The polypeptide is Probable cytosol aminopeptidase (Parasynechococcus marenigrum (strain WH8102)).